Here is a 497-residue protein sequence, read N- to C-terminus: Glutamate--tRNA ligase (497 aa).

Positions 13 to 23 match the 'HIGH' region motif; it reads PSPTGTPHVGM. Residues 257 to 261 carry the 'KMSKS' region motif; the sequence is KLSKR. Lysine 260 is an ATP binding site.

The protein belongs to the class-I aminoacyl-tRNA synthetase family. Glutamate--tRNA ligase type 1 subfamily. As to quaternary structure, monomer.

It localises to the cytoplasm. The catalysed reaction is tRNA(Glu) + L-glutamate + ATP = L-glutamyl-tRNA(Glu) + AMP + diphosphate. Functionally, catalyzes the attachment of glutamate to tRNA(Glu) in a two-step reaction: glutamate is first activated by ATP to form Glu-AMP and then transferred to the acceptor end of tRNA(Glu). The chain is Glutamate--tRNA ligase from Corynebacterium diphtheriae (strain ATCC 700971 / NCTC 13129 / Biotype gravis).